Here is a 203-residue protein sequence, read N- to C-terminus: MLILASASQSRKKLLENCQIEFIQIASKFDETTIQEKNIFNLALELSFQKANSLSENIQNLSLPEEFNYGTMEILGCDSIFEFKGEAYGKPSNKEEAFIRWKKMSGEFGFLHTGHTLIIGNFDSTSNIFKITEIIKKTVSSRVYFSNLEDWEIKSYVDTNEPLYCAGGFALEGIGGKYIEKIEGCFSNVMGLSLPWLRENLYR.

The Proton acceptor role is filled by Asp78.

This sequence belongs to the Maf family. The cofactor is a divalent metal cation.

The protein localises to the cytoplasm. It carries out the reaction a ribonucleoside 5'-triphosphate + H2O = a ribonucleoside 5'-phosphate + diphosphate + H(+). The catalysed reaction is a 2'-deoxyribonucleoside 5'-triphosphate + H2O = a 2'-deoxyribonucleoside 5'-phosphate + diphosphate + H(+). Its function is as follows. Nucleoside triphosphate pyrophosphatase. May have a dual role in cell division arrest and in preventing the incorporation of modified nucleotides into cellular nucleic acids. The sequence is that of Nucleoside triphosphate pyrophosphatase from Prochlorococcus marinus (strain AS9601).